A 299-amino-acid chain; its full sequence is Bifunctional protein FolD 1 (299 aa).

NADP(+)-binding positions include 168-170 (GRS), Ser193, and Ile234.

It belongs to the tetrahydrofolate dehydrogenase/cyclohydrolase family. In terms of assembly, homodimer.

It carries out the reaction (6R)-5,10-methylene-5,6,7,8-tetrahydrofolate + NADP(+) = (6R)-5,10-methenyltetrahydrofolate + NADPH. The catalysed reaction is (6R)-5,10-methenyltetrahydrofolate + H2O = (6R)-10-formyltetrahydrofolate + H(+). It participates in one-carbon metabolism; tetrahydrofolate interconversion. Its function is as follows. Catalyzes the oxidation of 5,10-methylenetetrahydrofolate to 5,10-methenyltetrahydrofolate and then the hydrolysis of 5,10-methenyltetrahydrofolate to 10-formyltetrahydrofolate. The protein is Bifunctional protein FolD 1 of Rhizobium etli (strain ATCC 51251 / DSM 11541 / JCM 21823 / NBRC 15573 / CFN 42).